A 459-amino-acid polypeptide reads, in one-letter code: Glycerol-3-phosphate acyltransferase, chloroplastic (459 aa).

The transit peptide at 1–90 (MTLTFSSSAA…FNEAAGETPS (90 aa)) directs the protein to the chloroplast. Residues 229-234 (HQSEAD) carry the HXXXXD motif motif.

The protein belongs to the GPAT/DAPAT family.

The protein localises to the plastid. It is found in the chloroplast stroma. It catalyses the reaction sn-glycerol 3-phosphate + an acyl-CoA = a 1-acyl-sn-glycero-3-phosphate + CoA. The protein operates within phospholipid metabolism; CDP-diacylglycerol biosynthesis; CDP-diacylglycerol from sn-glycerol 3-phosphate: step 1/3. In terms of biological role, esterifies acyl-group from acyl-ACP to the sn-1 position of glycerol-3-phosphate. The enzyme from chilling-resistant plants discriminates against non-fluid palmitic acid and selects oleic acid whereas the enzyme from sensitive plants accepts both fatty acids. This is an oleate-selective acyltransferase. This Arabidopsis thaliana (Mouse-ear cress) protein is Glycerol-3-phosphate acyltransferase, chloroplastic (ATS1).